The sequence spans 134 residues: MAAEWHKIIEDVSKNNKFEDAAIVDYKTKKNVLAAIPNRTFAKIIPGEVIALITNRNILKPRIGQKFFIVYTNSLMDENTYTMELLTGYAPVSPIVIARTHTALIFLMGKPTTSRREVYRTCRDYATNVRATGN.

This sequence belongs to the profilin family. As to quaternary structure, interacts with host Tpm1. Interacts with protein A25.

It is found in the host cytoplasm. Its function is as follows. Participates in either intracellular transport of viral proteins or intercellular spread of the virus. Cellular profilins modulate actin filament dynamics (polymerization and depolymerization) via direct binding to actin through an actin-binding domain as well as by modulation of other actin-binding proteins. In contrast to cellular homologs, the poxvirus profilins seem to bind actin only weakly. The protein is Profilin of Ectromelia virus (strain Moscow) (ECTV).